Reading from the N-terminus, the 693-residue chain is MAREFSLEKTRNIGIMAHVDAGKTTTTERILYYTGKIHKIGETHEGASQMDWMEQEQERGITITSAATTAQWNNHRVNIIDTPGHVDFTIEVQRSLRVLDGAVTVLDSQSGVEPQTETVWRQATEYGVPRIVFANKMDKIGADFLYSVSTLHDRLQANAHPIQLPIGSEDDFRGIIDLIKMKAEIYTNDLGTDILEEDIPAEYLDQAQEYREKLVEAVAETDEELMMKYLEGEEITNEELKAGIRKATINVEFFPVLCGSAFKNKGVQLMLDAVIDYLPSPLDIPAIKGINPDTDAEETRPASDEEPFAALAFKIMTDPFVGRLTFFRVYSGVLQSGSYVLNTSKGKRERIGRILQMHANSRQEIETVYSGDIAAAVGLKDTTTGDSLTDEKAKIILESINVPEPVIQLMVEPKSKADQDKMGIALQKLAEEDPTFRVETNVETGETVISGMGELHLDVLVDRMRREFKVEANVGAPQVSYRETFRASTQARGFFKRQSGGKGQFGDVWIEFTPNEEGKGFEFENAIVGGVVPREFIPAVEKGLVESMANGVLAGYPMVDVKAKLYDGSYHDVDSSETAFKIAASLALKEAAKSAQPAILEPMMLVTITVPEENLGDVMGHVTARRGRVDGMEAHGNSQIVRAYVPLAEMFGYATVLRSASQGRGTFMMVFDHYEDVPKSVQEEIIKKNKGED.

The 275-residue stretch at 8–282 folds into the tr-type G domain; that stretch reads EKTRNIGIMA…AVIDYLPSPL (275 aa). Residues 17 to 24, 81 to 85, and 135 to 138 contribute to the GTP site; these read AHVDAGKT, DTPGH, and NKMD.

Belongs to the TRAFAC class translation factor GTPase superfamily. Classic translation factor GTPase family. EF-G/EF-2 subfamily.

The protein localises to the cytoplasm. Catalyzes the GTP-dependent ribosomal translocation step during translation elongation. During this step, the ribosome changes from the pre-translocational (PRE) to the post-translocational (POST) state as the newly formed A-site-bound peptidyl-tRNA and P-site-bound deacylated tRNA move to the P and E sites, respectively. Catalyzes the coordinated movement of the two tRNA molecules, the mRNA and conformational changes in the ribosome. The chain is Elongation factor G from Streptococcus pneumoniae (strain P1031).